The chain runs to 241 residues: Orotidine 5'-phosphate decarboxylase (241 aa).

Substrate-binding positions include Asp-15, Lys-37, Asp-64–Thr-73, Thr-126, Arg-187, Gln-196, Gly-216, and Arg-217. The Proton donor role is filled by Lys-66.

This sequence belongs to the OMP decarboxylase family. Type 1 subfamily. As to quaternary structure, homodimer.

It carries out the reaction orotidine 5'-phosphate + H(+) = UMP + CO2. Its pathway is pyrimidine metabolism; UMP biosynthesis via de novo pathway; UMP from orotate: step 2/2. Catalyzes the decarboxylation of orotidine 5'-monophosphate (OMP) to uridine 5'-monophosphate (UMP). The polypeptide is Orotidine 5'-phosphate decarboxylase (Geotalea uraniireducens (strain Rf4) (Geobacter uraniireducens)).